Reading from the N-terminus, the 173-residue chain is MAESQAKSPGGCGSHESGGDQSPRSLHVREQDRFLPIANISRIMKRGLPANGKIAKDAKEIVQECVSEFISFVTSEASDKCQREKRKTINGDDLLWAMATLGFEDYMEPLKVYLMRYREMEGDTKGSAKGGDPNAKKDGQSSQNGQFSQLAHQGPYGNSQAQQHMMVPMPGTD.

The segment at 1 to 30 (MAESQAKSPGGCGSHESGGDQSPRSLHVRE) is disordered. An N-acetylalanine modification is found at alanine 2. The DNA-binding element occupies 35–41 (LPIANIS). The segment at 62 to 73 (VQECVSEFISFV) is subunit association domain (SAD). The interval 123-173 (DTKGSAKGGDPNAKKDGQSSQNGQFSQLAHQGPYGNSQAQQHMMVPMPGTD) is disordered. The segment covering 140–163 (QSSQNGQFSQLAHQGPYGNSQAQQ) has biased composition (polar residues).

It belongs to the NFYB/HAP3 subunit family. Heterotrimeric transcription factor composed of three components, NF-YA, NF-YB and NF-YC. NF-YB and NF-YC must interact and dimerize for NF-YA association and DNA binding. Expressed in flowers and mature rosettes.

Its subcellular location is the nucleus. In terms of biological role, component of the NF-Y/HAP transcription factor complex. The NF-Y complex stimulates the transcription of various genes by recognizing and binding to a CCAAT motif in promoters. This Arabidopsis thaliana (Mouse-ear cress) protein is Nuclear transcription factor Y subunit B-8 (NFYB8).